The primary structure comprises 110 residues: Waprin-Thr1 (110 aa).

Positions 1–20 (MYKKGTILVLAYLLIATAVC) are cleaved as a signal peptide. Positions 22 to 68 (LSYKEGHCPLRNSVSKCIPRCVSDYQCSFNEKCCPNKCGSESCVQAS) constitute a WAP domain. 4 disulfide bridges follow: cysteine 29–cysteine 55, cysteine 38–cysteine 59, cysteine 42–cysteine 54, and cysteine 48–cysteine 64.

The protein belongs to the venom waprin family. Cys-rich waprin subfamily. In terms of tissue distribution, expressed by the venom gland.

The protein localises to the secreted. In terms of biological role, antimicrobial peptides with activity against Gram-positive and Gram-negative bacteria as well as fungi. Recognizes carbohydrates in the microbial cell walls, and induces structural damage to them. Also inhibits microbial serine proteases subtilisin A and proteinase K, as well as human and porcine elastases. Carbohydrates that are recognized are LPS, mannan, peptidoglycan, and N-acetl-D-glucosamine. The sequence is that of Waprin-Thr1 from Apis mellifera (Honeybee).